The primary structure comprises 265 residues: Glutamate racemase (265 aa).

Substrate is bound by residues 12–13 (DS) and 44–45 (YG). The active-site Proton donor/acceptor is the Cys75. Substrate is bound at residue 76–77 (NT). Cys186 acts as the Proton donor/acceptor in catalysis. Residue 187-188 (TH) participates in substrate binding.

Belongs to the aspartate/glutamate racemases family.

It carries out the reaction L-glutamate = D-glutamate. It participates in cell wall biogenesis; peptidoglycan biosynthesis. Provides the (R)-glutamate required for cell wall biosynthesis. This chain is Glutamate racemase, found in Pseudomonas aeruginosa (strain UCBPP-PA14).